The following is a 290-amino-acid chain: Inorganic pyrophosphatase (290 aa).

R81 is a binding site for diphosphate. Positions 118, 123, and 155 each coordinate Mg(2+).

It belongs to the PPase family. Mg(2+) serves as cofactor.

It is found in the cytoplasm. It carries out the reaction diphosphate + H2O = 2 phosphate + H(+). This is Inorganic pyrophosphatase (ipp-1) from Neurospora crassa (strain ATCC 24698 / 74-OR23-1A / CBS 708.71 / DSM 1257 / FGSC 987).